The primary structure comprises 342 residues: DNA primase small subunit PriS (342 aa).

Catalysis depends on residues aspartate 97, aspartate 99, and aspartate 236.

This sequence belongs to the eukaryotic-type primase small subunit family. In terms of assembly, heterodimer of a small subunit (PriS) and a large subunit (PriL). The cofactor is Mg(2+). It depends on Mn(2+) as a cofactor.

Functionally, catalytic subunit of DNA primase, an RNA polymerase that catalyzes the synthesis of short RNA molecules used as primers for DNA polymerase during DNA replication. The small subunit contains the primase catalytic core and has DNA synthesis activity on its own. Binding to the large subunit stabilizes and modulates the activity, increasing the rate of DNA synthesis while decreasing the length of the DNA fragments, and conferring RNA synthesis capability. The DNA polymerase activity may enable DNA primase to also catalyze primer extension after primer synthesis. May also play a role in DNA repair. This chain is DNA primase small subunit PriS, found in Aeropyrum pernix (strain ATCC 700893 / DSM 11879 / JCM 9820 / NBRC 100138 / K1).